Reading from the N-terminus, the 365-residue chain is Phosphoserine aminotransferase (365 aa).

Arg40 lines the L-glutamate pocket. Pyridoxal 5'-phosphate contacts are provided by residues Ala74–Ser75, Phe99, Thr155, Asp177, and Gln200. Position 201 is an N6-(pyridoxal phosphate)lysine (Lys201). Asn241–Thr242 is a binding site for pyridoxal 5'-phosphate.

The protein belongs to the class-V pyridoxal-phosphate-dependent aminotransferase family. SerC subfamily. As to quaternary structure, homodimer. Pyridoxal 5'-phosphate is required as a cofactor.

The protein localises to the cytoplasm. It carries out the reaction O-phospho-L-serine + 2-oxoglutarate = 3-phosphooxypyruvate + L-glutamate. It catalyses the reaction 4-(phosphooxy)-L-threonine + 2-oxoglutarate = (R)-3-hydroxy-2-oxo-4-phosphooxybutanoate + L-glutamate. It functions in the pathway amino-acid biosynthesis; L-serine biosynthesis; L-serine from 3-phospho-D-glycerate: step 2/3. Functionally, catalyzes the reversible conversion of 3-phosphohydroxypyruvate to phosphoserine and of 3-hydroxy-2-oxo-4-phosphonooxybutanoate to phosphohydroxythreonine. This Lactococcus lactis subsp. cremoris (strain MG1363) protein is Phosphoserine aminotransferase.